A 214-amino-acid polypeptide reads, in one-letter code: RNA-free ribonuclease P (214 aa).

It belongs to the HARP family.

The enzyme catalyses Endonucleolytic cleavage of RNA, removing 5'-extranucleotides from tRNA precursor.. Its function is as follows. RNA-free RNase P that catalyzes the removal of the 5'-leader sequence from pre-tRNA to produce the mature 5'-terminus. This Aeropyrum pernix (strain ATCC 700893 / DSM 11879 / JCM 9820 / NBRC 100138 / K1) protein is RNA-free ribonuclease P.